The primary structure comprises 706 residues: Acyl-coenzyme A oxidase (706 aa).

The tract at residues 682-706 (MLNRPSKEERERFEKSTETAKILSK) is disordered. Residues 686 to 699 (PSKEERERFEKSTE) are compositionally biased toward basic and acidic residues.

It belongs to the acyl-CoA oxidase family. The cofactor is FAD.

The protein resides in the peroxisome. The catalysed reaction is a 2,3-saturated acyl-CoA + O2 = a (2E)-enoyl-CoA + H2O2. Its pathway is lipid metabolism; peroxisomal fatty acid beta-oxidation. This chain is Acyl-coenzyme A oxidase (POX1), found in Debaryomyces hansenii (strain ATCC 36239 / CBS 767 / BCRC 21394 / JCM 1990 / NBRC 0083 / IGC 2968) (Yeast).